The primary structure comprises 222 residues: Cytidylate kinase (222 aa).

7–15 (GPSASGKSS) is a binding site for ATP.

It belongs to the cytidylate kinase family. Type 1 subfamily.

Its subcellular location is the cytoplasm. It catalyses the reaction CMP + ATP = CDP + ADP. The enzyme catalyses dCMP + ATP = dCDP + ADP. The chain is Cytidylate kinase from Borrelia turicatae (strain 91E135).